Consider the following 493-residue polypeptide: MGTAKVTPSLVFAVTVATIGSFQFGYNTGVINAPETIIKDFLNYTLEERLEDLPREGLLTTLWSLCVAIFSVGGMIGSFSVGLFVNRFGRRNSMLLVNLIAILGGCLMGFAKIAESVEMLILGRLIIGIFCGLCTGFVPMYIGEVSPTALRGAFGTLNQLGIVVGILVAQVFGLDFILGSEELWPGLLGLTIIPAILQSAALPFCPESPRFLLINRKEEDQATEILQRLWGTPDVIQEIQEMKDESIRMSQEKQVTVLELFKSPSYFQPLLISVVLQLSQQFSGINAVFYYSTGIFQDAGVQEPIYATIGAGVVNTIFTVVSLFLVERAGRRTLHMIGLGGMAVCSVFMTISLLLKDEYEAMSFVCIVAILVYVAFFEIGPGPIPWFIVAELFSQGPRPAAMAVAGCSNWTSNFLVGMFFPSAAAYLGAYVFIIFAAFLVFFLIFTSFKVPETKGRTFEDITRAFEGQAHSGKGSAGVELNSMQPVKETPGNA.

At 1–10 the chain is on the cytoplasmic side; that stretch reads MGTAKVTPSL. Residues 11-32 traverse the membrane as a helical segment; that stretch reads VFAVTVATIGSFQFGYNTGVIN. Over 33–64 the chain is Extracellular; that stretch reads APETIIKDFLNYTLEERLEDLPREGLLTTLWS. N43 is a glycosylation site (N-linked (GlcNAc...) asparagine). Residues 65–85 traverse the membrane as a helical segment; it reads LCVAIFSVGGMIGSFSVGLFV. Residues 86–90 lie on the Cytoplasmic side of the membrane; that stretch reads NRFGR. The helical transmembrane segment at 91-111 threads the bilayer; the sequence is RNSMLLVNLIAILGGCLMGFA. Residues 112-118 lie on the Extracellular side of the membrane; the sequence is KIAESVE. The helical transmembrane segment at 119–142 threads the bilayer; that stretch reads MLILGRLIIGIFCGLCTGFVPMYI. At 143–153 the chain is on the cytoplasmic side; sequence GEVSPTALRGA. The helical transmembrane segment at 154–174 threads the bilayer; it reads FGTLNQLGIVVGILVAQVFGL. Q159 contacts D-glucose. Topologically, residues 175–183 are extracellular; sequence DFILGSEEL. A helical membrane pass occupies residues 184–204; the sequence is WPGLLGLTIIPAILQSAALPF. The Cytoplasmic portion of the chain corresponds to 205–269; that stretch reads CPESPRFLLI…LFKSPSYFQP (65 aa). Phosphothreonine is present on T232. A helical transmembrane segment spans residues 270–290; that stretch reads LLISVVLQLSQQFSGINAVFY. The tract at residues 277–279 is important for selectivity against fructose; it reads QLS. D-glucose-binding positions include 280 to 281 and N286; that span reads QQ. Residues 291-304 are Extracellular-facing; it reads YSTGIFQDAGVQEP. Residues 305–325 traverse the membrane as a helical segment; the sequence is IYATIGAGVVNTIFTVVSLFL. N315 contributes to the D-glucose binding site. Residues 326 to 331 lie on the Cytoplasmic side of the membrane; it reads VERAGR. Residues 332–352 form a helical membrane-spanning segment; it reads RTLHMIGLGGMAVCSVFMTIS. The Extracellular segment spans residues 353–363; the sequence is LLLKDEYEAMS. The helical transmembrane segment at 364–389 threads the bilayer; sequence FVCIVAILVYVAFFEIGPGPIPWFIV. E378 and W386 together coordinate D-glucose. The Cytoplasmic segment spans residues 390-399; it reads AELFSQGPRP. The helical transmembrane segment at 400–420 threads the bilayer; sequence AAMAVAGCSNWTSNFLVGMFF. Residues 421 to 429 are Extracellular-facing; that stretch reads PSAAAYLGA. The helical transmembrane segment at 430 to 450 threads the bilayer; it reads YVFIIFAAFLVFFLIFTSFKV. Over 451–493 the chain is Cytoplasmic; sequence PETKGRTFEDITRAFEGQAHSGKGSAGVELNSMQPVKETPGNA. Residues S471, S475, and S482 each carry the phosphoserine modification. Residue T489 is modified to Phosphothreonine.

It belongs to the major facilitator superfamily. Sugar transporter (TC 2.A.1.1) family. Glucose transporter subfamily. In terms of assembly, interacts with SMIM43; the interaction may promote SLC2A3-mediated glucose transport to meet the energy needs of mesendoderm differentiation. As to expression, brain and osteoblastic cells (at protein level). Highly expressed in brain.

The protein localises to the cell membrane. Its subcellular location is the perikaryon. It localises to the cell projection. It catalyses the reaction D-glucose(out) = D-glucose(in). The catalysed reaction is D-galactose(in) = D-galactose(out). With respect to regulation, deoxyglucose transport is inhibited by D-glucose, D-galactose and maltose. Galactose transport is inhibited by D-glucose and maltose. Functionally, facilitative glucose transporter. Can also mediate the uptake of various other monosaccharides across the cell membrane. Mediates the uptake of glucose, 2-deoxyglucose, galactose, mannose, xylose and fucose, and probably also dehydroascorbate. Does not mediate fructose transport. Required for mesendoderm differentiation. The polypeptide is Solute carrier family 2, facilitated glucose transporter member 3 (Rattus norvegicus (Rat)).